Consider the following 1213-residue polypeptide: DNA-directed RNA polymerase subunit beta' (1213 aa).

Residues Cys-60, Cys-62, Cys-75, and Cys-78 each contribute to the Zn(2+) site. Residues Asp-450, Asp-452, and Asp-454 each contribute to the Mg(2+) site. Residues Cys-819, Cys-893, Cys-900, and Cys-903 each contribute to the Zn(2+) site.

It belongs to the RNA polymerase beta' chain family. As to quaternary structure, the RNAP catalytic core consists of 2 alpha, 1 beta, 1 beta' and 1 omega subunit. When a sigma factor is associated with the core the holoenzyme is formed, which can initiate transcription. Mg(2+) serves as cofactor. It depends on Zn(2+) as a cofactor.

It carries out the reaction RNA(n) + a ribonucleoside 5'-triphosphate = RNA(n+1) + diphosphate. In terms of biological role, DNA-dependent RNA polymerase catalyzes the transcription of DNA into RNA using the four ribonucleoside triphosphates as substrates. This is DNA-directed RNA polymerase subunit beta' from Streptococcus pyogenes serotype M1.